The primary structure comprises 405 residues: Prenyltransferase phqA (405 aa).

The dimethylallyl diphosphate site is built by Tyr195, Lys262, and Gln332.

This sequence belongs to the tryptophan dimethylallyltransferase family.

The protein operates within alkaloid biosynthesis. In terms of biological role, prenyltransferase; part of the gene cluster that mediates the biosynthesis of paraherquamide, a fungal indole alkaloid that belongs to a family of natural products containing a characteristic bicyclo[2.2.2]diazaoctane core. The first steps in the biosynthesis of paraherquamide is the production of the beta-methyl-proline precursor from L-isoleucine. They require oxidation of a terminally hydroxylated L-isoleucine to the corresponding aldehyde by enzymes which have still to be identified. Spontaneous cyclization and dehydration would yield the 4-methyl pyrolline-5-carboxylic acid, which is then reduced by the pyrroline-5-carboxylate reductase phqD leading to the beta-methyl-proline precursor. The next step of paraherquamide biosynthesis involves coupling of beta-methyl-proline and L-tryptophan by the bimodular NRPS phqB, to produce a monooxopiperazine intermediate. The reductase (R) domain of phqB utilizes NADPH for hydride transfer to reduce the thioester bond of the T domain-tethered linear dipeptide to a hemithioaminal intermediate, which spontaneously cleaves the C-S bond to release the aldehyde product. This compound undergoes spontaneous cyclization and dehydration to give a dienamine which is reverse prenylated at C-2 by the reverse prenyltransferase phqJ. The other prenyltransferase present in the cluster, phqI may be a redundant gene in the pathway. During biosynthetic assembly, the key step to produce the polycyclic core is catalyzed by the bifunctional reductase and intramolecular [4+2] Diels-Alderase, phqE, resulting in formation of the [2.2.2] diazaoctane intermediate preparaherquamide. Following formation of preparaherquamide, an indole 2,3-epoxidation-initiated pinacol-like rearrangement is catalyzed by the phqK FAD-dependent monooxygenase. The prenyltransferase phqA, the cytochrome P450 monooxygenase phqL, and the FAD-linked oxidoreductase phqH (or the cytochrome P450 monooxygenase phqM), are proposed to be involved in the formation of the pyran ring. The FAD-dependent monooxygenase phqK is likely responsible for generation of the spiro-oxindole, and the N-methylation is likely mediated by the phqN methyltransferase leading to the isolable natural product paraherquamide F. However, the order of these biosynthetic steps has still to be determined. In late-stage paraherquamide biosynthesis, the third P450 monooxygenase, phqO, is probably responsible for the C-14 hydroxylation, transforming paraherquamide F to paraherquamide G, and paraherquamide E to the final product paraherquamide A. The expansion from the 6-membered ring pyran (in paraherquamides F and G) to the 7-membered dioxepin ring (in paraherquamides A and E) represents a poorly understood but intriguing process that probably involves the 2-oxoglutarate-dependent dioxygenase phqC. Finally, the remaining members of the paraherquamide cluster, including phqI as well as phqM (or phqH), do not have a clearly prescribed role and appear to be redundant. The sequence is that of Prenyltransferase phqA from Penicillium fellutanum.